The chain runs to 653 residues: Chaperone protein dnaK3 (653 aa).

At Thr197 the chain carries Phosphothreonine; by autocatalysis.

Belongs to the heat shock protein 70 family.

Functionally, acts as a chaperone. The sequence is that of Chaperone protein dnaK3 (dnaK3) from Nostoc sp. (strain PCC 7120 / SAG 25.82 / UTEX 2576).